A 307-amino-acid polypeptide reads, in one-letter code: Ribosomal protein uL3 glutamine methyltransferase (307 aa).

The protein belongs to the protein N5-glutamine methyltransferase family. PrmB subfamily.

It catalyses the reaction L-glutaminyl-[ribosomal protein uL3] + S-adenosyl-L-methionine = N(5)-methyl-L-glutaminyl-[ribosomal protein uL3] + S-adenosyl-L-homocysteine + H(+). In terms of biological role, methylates large ribosomal subunit protein uL3 on a specific glutamine residue. The polypeptide is Ribosomal protein uL3 glutamine methyltransferase (Burkholderia pseudomallei (strain K96243)).